The following is a 443-amino-acid chain: Enolase (443 aa).

(2R)-2-phosphoglycerate is bound at residue Gln167. The Proton donor role is filled by Glu209. Mg(2+)-binding residues include Asp246, Glu291, and Asp318. (2R)-2-phosphoglycerate contacts are provided by Lys343, Arg372, Ser373, and Lys394. Lys343 serves as the catalytic Proton acceptor.

This sequence belongs to the enolase family. Component of the RNA degradosome, a multiprotein complex involved in RNA processing and mRNA degradation. It depends on Mg(2+) as a cofactor.

It localises to the cytoplasm. The protein resides in the secreted. Its subcellular location is the cell surface. It catalyses the reaction (2R)-2-phosphoglycerate = phosphoenolpyruvate + H2O. It participates in carbohydrate degradation; glycolysis; pyruvate from D-glyceraldehyde 3-phosphate: step 4/5. Catalyzes the reversible conversion of 2-phosphoglycerate (2-PG) into phosphoenolpyruvate (PEP). It is essential for the degradation of carbohydrates via glycolysis. In Wigglesworthia glossinidia brevipalpis, this protein is Enolase.